The sequence spans 188 residues: dCTP deaminase (188 aa).

DCTP-binding positions include 111 to 116, 135 to 137, Q156, Y170, and Q180; these read KSTYAR and TLE. E137 functions as the Proton donor/acceptor in the catalytic mechanism.

Belongs to the dCTP deaminase family. As to quaternary structure, homotrimer.

The catalysed reaction is dCTP + H2O + H(+) = dUTP + NH4(+). Its pathway is pyrimidine metabolism; dUMP biosynthesis; dUMP from dCTP (dUTP route): step 1/2. In terms of biological role, catalyzes the deamination of dCTP to dUTP. This is dCTP deaminase from Methylococcus capsulatus (strain ATCC 33009 / NCIMB 11132 / Bath).